A 102-amino-acid chain; its full sequence is Co-chaperonin GroES (102 aa).

This sequence belongs to the GroES chaperonin family. Heptamer of 7 subunits arranged in a ring. Interacts with the chaperonin GroEL.

The protein localises to the cytoplasm. In terms of biological role, together with the chaperonin GroEL, plays an essential role in assisting protein folding. The GroEL-GroES system forms a nano-cage that allows encapsulation of the non-native substrate proteins and provides a physical environment optimized to promote and accelerate protein folding. GroES binds to the apical surface of the GroEL ring, thereby capping the opening of the GroEL channel. This is Co-chaperonin GroES from Chlamydia muridarum (strain MoPn / Nigg).